A 156-amino-acid polypeptide reads, in one-letter code: ATP synthase subunit b (156 aa).

A helical transmembrane segment spans residues 12 to 32 (VAFFIFVIFCMKFVWPPVIAA).

This sequence belongs to the ATPase B chain family. As to quaternary structure, F-type ATPases have 2 components, F(1) - the catalytic core - and F(0) - the membrane proton channel. F(1) has five subunits: alpha(3), beta(3), gamma(1), delta(1), epsilon(1). F(0) has three main subunits: a(1), b(2) and c(10-14). The alpha and beta chains form an alternating ring which encloses part of the gamma chain. F(1) is attached to F(0) by a central stalk formed by the gamma and epsilon chains, while a peripheral stalk is formed by the delta and b chains.

Its subcellular location is the cell inner membrane. Its function is as follows. F(1)F(0) ATP synthase produces ATP from ADP in the presence of a proton or sodium gradient. F-type ATPases consist of two structural domains, F(1) containing the extramembraneous catalytic core and F(0) containing the membrane proton channel, linked together by a central stalk and a peripheral stalk. During catalysis, ATP synthesis in the catalytic domain of F(1) is coupled via a rotary mechanism of the central stalk subunits to proton translocation. In terms of biological role, component of the F(0) channel, it forms part of the peripheral stalk, linking F(1) to F(0). In Pseudomonas savastanoi pv. phaseolicola (strain 1448A / Race 6) (Pseudomonas syringae pv. phaseolicola (strain 1448A / Race 6)), this protein is ATP synthase subunit b.